The chain runs to 277 residues: Undecaprenyl-diphosphatase (277 aa).

8 helical membrane passes run 19–39, 44–64, 89–109, 122–142, 154–174, 195–215, 224–244, and 257–277; these read FLPV…PFYG, FDDL…LFLY, FHFL…GFIA, LLEI…VAEW, IGFK…IPGM, AEFS…YKLI, NTIP…TLVI, and SVFG…TKLI.

This sequence belongs to the UppP family.

It is found in the cell inner membrane. The enzyme catalyses di-trans,octa-cis-undecaprenyl diphosphate + H2O = di-trans,octa-cis-undecaprenyl phosphate + phosphate + H(+). Catalyzes the dephosphorylation of undecaprenyl diphosphate (UPP). Confers resistance to bacitracin. This Leptospira interrogans serogroup Icterohaemorrhagiae serovar copenhageni (strain Fiocruz L1-130) protein is Undecaprenyl-diphosphatase.